An 885-amino-acid polypeptide reads, in one-letter code: Alanine--tRNA ligase (885 aa).

4 residues coordinate Zn(2+): histidine 564, histidine 568, cysteine 676, and histidine 680.

This sequence belongs to the class-II aminoacyl-tRNA synthetase family. Zn(2+) is required as a cofactor.

It is found in the cytoplasm. The catalysed reaction is tRNA(Ala) + L-alanine + ATP = L-alanyl-tRNA(Ala) + AMP + diphosphate. Catalyzes the attachment of alanine to tRNA(Ala) in a two-step reaction: alanine is first activated by ATP to form Ala-AMP and then transferred to the acceptor end of tRNA(Ala). Also edits incorrectly charged Ser-tRNA(Ala) and Gly-tRNA(Ala) via its editing domain. In Brucella abortus (strain 2308), this protein is Alanine--tRNA ligase.